Consider the following 471-residue polypeptide: MPTPLILHDDRLLPADPATRAIARRLYAQTAALPIISPHGHTDPAWFATDAPFANATELLLVPDHYVFRMLYSQGIDLDQLGIPHADGSRAPVDPREAWRVFASQFALLRGTPSALWLNHVFHQVFDLRIRLDAGSADHYYDHITAALQTPAFRPRALFERFNIEVIATTESPLDTLEHHATIRDSGWSGRVLTAYRPDAVVDPEHEQFASALQQFGALTGEDVMQWPGYLRAHRQRRAFFAAAGATSTDHGHPSAATADLSPAEAQRLFDTVVRGQATPAQAELFRAQVLTEMAAMSVDDGLVMQLHPGCFRNHNRALFERYGRDKGADIPMRTDYVHALKPLLDRFGNDPRFRLIVFTLDETSYSRELAPLAGHYPALLLGPAWWFHDAPEGMWRFREQTLASAGFYNTVGFNDDTRAFLSIPARHDVARRVDSAFLAKLVAEHRLDEDEAMEVAIDLAYRLPKQAYKL.

The protein belongs to the metallo-dependent hydrolases superfamily. Uronate isomerase family.

It catalyses the reaction D-glucuronate = D-fructuronate. The enzyme catalyses aldehydo-D-galacturonate = keto-D-tagaturonate. Its pathway is carbohydrate metabolism; pentose and glucuronate interconversion. This is Uronate isomerase from Xanthomonas campestris pv. campestris (strain B100).